Consider the following 720-residue polypeptide: Methionine--tRNA ligase (720 aa).

The short motif at 27 to 37 (PYANGQIHIGH) is the 'HIGH' region element. Positions 158, 161, 171, and 174 each coordinate Zn(2+). The 'KMSKS' region motif lies at 348–352 (KMSKS). Position 351 (lysine 351) interacts with ATP. Residues 614 to 720 (DFAKVDLRIA…SGAKPGMRVK (107 aa)) enclose the tRNA-binding domain.

It belongs to the class-I aminoacyl-tRNA synthetase family. MetG type 1 subfamily. As to quaternary structure, homodimer. Zn(2+) is required as a cofactor.

The protein localises to the cytoplasm. It carries out the reaction tRNA(Met) + L-methionine + ATP = L-methionyl-tRNA(Met) + AMP + diphosphate. In terms of biological role, is required not only for elongation of protein synthesis but also for the initiation of all mRNA translation through initiator tRNA(fMet) aminoacylation. The protein is Methionine--tRNA ligase of Burkholderia ambifaria (strain MC40-6).